A 781-amino-acid chain; its full sequence is Dual specificity protein kinase zakA (781 aa).

2 consecutive Protein kinase domains span residues 9-317 and 379-654; these read WEEI…HKLI and DKDD…EIGL. Residues 15-23 and lysine 44 contribute to the ATP site; that span reads IGEGQYGRV. The active-site Proton acceptor is aspartate 132. The disordered stretch occupies residues 168–209; it reads ETTNNNNNPNNNNNNNNNNNNNNNNNNNNNNNNNNINNINNN. Residues 171–209 are compositionally biased toward low complexity; that stretch reads NNNNNPNNNNNNNNNNNNNNNNNNNNNNNNNNINNINNN. ATP contacts are provided by residues 385–393 and lysine 406; that span reads GGAGNFGDV. The Proton acceptor role is filled by aspartate 507.

In the N-terminal section; belongs to the protein kinase superfamily. Ser/Thr protein kinase family. This sequence in the C-terminal section; belongs to the protein kinase superfamily. TKL Tyr protein kinase family. Post-translationally, N-terminal serine/threonine domain is capable of autophosphorylation, in vitro, but to a lower extent than the tyrosine kinase domain. May function as a negative regulator of the tyrosine kinase domain. C-terminal tyrosine kinase domain is capable of autophosphorylation, in vitro. As to expression, zakA and zak2 are coexpressed in prestalk cell population, zakA is enriched in pstB populations and zak1 in pstA populations. ZakA and zak2 are coexpressed in prespore cells, zakA expression levels are 10 fold higher than zak2.

The enzyme catalyses L-seryl-[protein] + ATP = O-phospho-L-seryl-[protein] + ADP + H(+). It carries out the reaction L-threonyl-[protein] + ATP = O-phospho-L-threonyl-[protein] + ADP + H(+). The catalysed reaction is L-tyrosyl-[protein] + ATP = O-phospho-L-tyrosyl-[protein] + ADP + H(+). In terms of biological role, positive regulator of gsk3/gskA activity required for cell pattern formation and a downstream effector of carC. The kinases, gsk3/gskA, zakA and zak2, form part of a signaling pathway that responds to extracellular cyclic AMP. The pathway has a role in transcriptional regulation; required to direct prespore/spore fates during development. ZakA negatively regulates prestalk differentiation by regulating expression of ecmB. Phosphorylates Y-214 of gsk3/gskA, in vitro. The polypeptide is Dual specificity protein kinase zakA (zakA) (Dictyostelium discoideum (Social amoeba)).